We begin with the raw amino-acid sequence, 144 residues long: Maximins 11/H1 (144 aa).

Residues 1–18 (MNFKYIVAVSFLIASAYA) form the signal peptide. Positions 19-43 (RSEENDEQSLSQRDVLEEESLREIR) are excised as a propeptide. Asn70 is subject to Asparagine amide. Positions 74–123 (TAEDHEVMKRLEAVMRDLDSLDYPEEASERETRGFNQEEIANLFTKKEKR) are excised as a propeptide. Position 143 is a leucine amide (Leu143).

It belongs to the bombinin family. In terms of tissue distribution, expressed by the skin glands.

The protein resides in the secreted. Functionally, maximin-11 shows antimicrobial activity against bacteria and against the fungus C.albicans. It has little hemolytic activity. In terms of biological role, maximin-H1 shows antibacterial activity against both Gram-positive and Gram-negative bacteria. It also shows antimicrobial activity against the fungus C.albicans. Shows strong hemolytic activity. This chain is Maximins 11/H1, found in Bombina maxima (Giant fire-bellied toad).